The sequence spans 302 residues: Probable E3 ubiquitin-protein ligase RZFP34 (302 aa).

The segment at 54–130 (EGIMQYGCAH…VRQVCISCGV (77 aa)) adopts a CHY-type zinc-finger fold. Zn(2+)-binding residues include cysteine 61, histidine 63, cysteine 74, cysteine 75, cysteine 81, cysteine 84, histidine 85, histidine 100, cysteine 112, cysteine 115, cysteine 125, cysteine 128, cysteine 137, cysteine 140, histidine 153, cysteine 154, cysteine 157, cysteine 160, histidine 170, cysteine 171, cysteine 174, cysteine 177, histidine 186, and cysteine 188. The CTCHY-type zinc finger occupies 132-196 (MGKYFCEVCK…ACVEGAMHHD (65 aa)). Residues 197-240 (CPICFEYLFESTNDVSVLPCGHTIHVKCLREMEEHCQFACPLCS) form an RING-type; atypical zinc finger.

It is found in the nucleus. The catalysed reaction is S-ubiquitinyl-[E2 ubiquitin-conjugating enzyme]-L-cysteine + [acceptor protein]-L-lysine = [E2 ubiquitin-conjugating enzyme]-L-cysteine + N(6)-ubiquitinyl-[acceptor protein]-L-lysine.. The protein operates within protein modification; protein ubiquitination. Its function is as follows. Possesses transactivation activity in yeast cells. Involved in the regulation of stomatal aperture. May modulate the expression of genes that control stomata opening during heat shock or drought stress. The chain is Probable E3 ubiquitin-protein ligase RZFP34 from Oryza sativa subsp. japonica (Rice).